A 143-amino-acid polypeptide reads, in one-letter code: Actin-depolymerizing factor 5 (143 aa).

The region spanning 11–143 (GMNVKEECQR…GYDVIRGRAQ (133 aa)) is the ADF-H domain.

The protein belongs to the actin-binding proteins ADF family.

Functionally, actin-depolymerizing protein. Severs actin filaments (F-actin) and binds to actin monomers. This chain is Actin-depolymerizing factor 5 (ADF5), found in Oryza sativa subsp. japonica (Rice).